Here is a 516-residue protein sequence, read N- to C-terminus: uncharacterized protein (516 aa).

The disordered stretch occupies residues 1 to 35; it reads MAERTSESSSESASFDLEKQQSNHHDRYQSSVSSE. Positions 16–28 are enriched in basic and acidic residues; the sequence is DLEKQQSNHHDRY. S31 carries the post-translational modification Phosphoserine. 12 consecutive transmembrane segments (helical) span residues 77-97, 111-131, 143-163, 166-186, 198-218, 231-251, 301-321, 345-365, 386-406, 412-432, 439-461, and 481-501; these read VAVM…FSGA, VALL…VVWA, MIIA…AKDI, VMIC…TVAG, GLVI…SPIV, WTSY…IIFH, LLIF…VYGI, SLPY…VALF, LPSM…LAWT, IHWI…ITIF, IIDC…RSSF, and AGSL…MLFL.

Belongs to the major facilitator superfamily.

The protein localises to the membrane. This is an uncharacterized protein from Schizosaccharomyces pombe (strain 972 / ATCC 24843) (Fission yeast).